The following is a 207-amino-acid chain: Ribosomal RNA small subunit methyltransferase G (207 aa).

S-adenosyl-L-methionine contacts are provided by residues glycine 75, methionine 80, 126 to 127 (VE), and arginine 141.

This sequence belongs to the methyltransferase superfamily. RNA methyltransferase RsmG family.

It is found in the cytoplasm. It catalyses the reaction guanosine(527) in 16S rRNA + S-adenosyl-L-methionine = N(7)-methylguanosine(527) in 16S rRNA + S-adenosyl-L-homocysteine. Specifically methylates the N7 position of guanine in position 527 of 16S rRNA. The sequence is that of Ribosomal RNA small subunit methyltransferase G from Laribacter hongkongensis (strain HLHK9).